The sequence spans 387 residues: Sorting nexin-7 (387 aa).

In terms of domain architecture, PX spans Lys-30–Leu-151. Positions 73, 75, 103, and 117 each coordinate a 1,2-diacyl-sn-glycero-3-phospho-(1D-myo-inositol-3-phosphate). One can recognise a BAR domain in the interval Gly-178–Pro-387.

Belongs to the sorting nexin family. As to quaternary structure, heterodimer; heterodimerizes with SNX4.

The protein localises to the early endosome membrane. Its function is as follows. Involved in the regulation of endocytosis and in several stages of intracellular trafficking. Together with SNX4, involved in autophagosome assembly by regulating trafficking and recycling of phospholipid scramblase ATG9A. This Homo sapiens (Human) protein is Sorting nexin-7.